Here is a 700-residue protein sequence, read N- to C-terminus: Chaperonin CPN60, mitochondrial (700 aa).

A mitochondrion-targeting transit peptide spans 1–9 (MRMKRIHIL). The disordered stretch occupies residues 636-700 (TYKHKLHDDE…SMNDEYNYDE (65 aa)). A compositionally biased stretch (acidic residues) spans 644 to 700 (DEDTDEDDEEDEDDEDDEDDLDDDDYDDEDEEDEEDEEDEDDEDDEDSMNDEYNYDE).

The protein belongs to the chaperonin (HSP60) family.

It is found in the mitochondrion matrix. Its function is as follows. Implicated in mitochondrial protein import and macromolecular assembly. May facilitate the correct folding of imported proteins. May also prevent misfolding and promote the refolding and proper assembly of unfolded polypeptides generated under stress conditions in the mitochondrial matrix. This chain is Chaperonin CPN60, mitochondrial, found in Plasmodium falciparum (isolate FCR-3 / Gambia).